The sequence spans 428 residues: UPF0229 protein YeaH (428 aa).

Over residues 77 to 90 (PGNDHFIQNDRIER) the composition is skewed to basic and acidic residues. The tract at residues 77-111 (PGNDHFIQNDRIERPQSGGGGGSGSGQGQASQDGE) is disordered. Residues 93–103 (SGGGGGSGSGQ) show a composition bias toward gly residues.

Belongs to the UPF0229 family.

This Salmonella typhi protein is UPF0229 protein YeaH.